We begin with the raw amino-acid sequence, 273 residues long: 4-diphosphocytidyl-2-C-methyl-D-erythritol kinase (273 aa).

Lys-12 is a catalytic residue. ATP is bound at residue 90–100 (PVASGIGGGSA). Asp-122 is a catalytic residue.

The protein belongs to the GHMP kinase family. IspE subfamily.

The catalysed reaction is 4-CDP-2-C-methyl-D-erythritol + ATP = 4-CDP-2-C-methyl-D-erythritol 2-phosphate + ADP + H(+). It participates in isoprenoid biosynthesis; isopentenyl diphosphate biosynthesis via DXP pathway; isopentenyl diphosphate from 1-deoxy-D-xylulose 5-phosphate: step 3/6. In terms of biological role, catalyzes the phosphorylation of the position 2 hydroxy group of 4-diphosphocytidyl-2C-methyl-D-erythritol. This Paracoccus denitrificans (strain Pd 1222) protein is 4-diphosphocytidyl-2-C-methyl-D-erythritol kinase.